The primary structure comprises 604 residues: Replication protein A 70 kDa DNA-binding subunit B (604 aa).

Residues 170-256 constitute a DNA-binding region (OB); sequence WTIKVRVTNK…QNDYEMTLNE (87 aa). A C4-type zinc finger spans residues 468–488; that stretch reads CKTCNKKVTEAMDSGYWCESC.

This sequence belongs to the replication factor A protein 1 family. Heterotrimer of RPA1, RPA2 and RPA3 (canonical replication protein A complex).

It is found in the nucleus. Functionally, component of the replication protein A complex (RPA) required for DNA recombination, repair and replication. The activity of RPA is mediated by single-stranded DNA binding and protein interactions. Probably involved in repair of double-strand DNA breaks (DSBs) induced by genotoxic stresses. This is Replication protein A 70 kDa DNA-binding subunit B (RPA1B) from Arabidopsis thaliana (Mouse-ear cress).